The sequence spans 116 residues: Cation channel sperm-associated auxiliary subunit TMEM262 (116 aa).

At 1 to 16 (MRWRDRIAVLCFPPGL) the chain is on the cytoplasmic side. Residues 17–38 (MLTVAALILFFIHMGVFASDVH) form a helical membrane-spanning segment. At 39–51 (NFCVIHNYDHMSF) the chain is on the extracellular side. Residues 52–72 (RYTVVLIFSQVISIGWAAMGS) form a helical membrane-spanning segment. The Cytoplasmic portion of the chain corresponds to 73–84 (LYAEMTGDKFLR). Residues 85–107 (CFALTILILNGAMFFNRLCLEFL) form a helical membrane-spanning segment. The Extracellular segment spans residues 108 to 116 (AINYREERH).

As to quaternary structure, component of the CatSper complex or CatSpermasome composed of the core pore-forming members CATSPER1, CATSPER2, CATSPER3 and CATSPER4 as well as auxiliary members CATSPERB, CATSPERG, CATSPERD, CATSPERE, CATSPERZ, C2CD6/CATSPERT, SLCO6C1, TMEM249, TMEM262 and EFCAB9. HSPA1 may be an additional auxiliary complex member. The core complex members CATSPER1, CATSPER2, CATSPER3 and CATSPER4 form a heterotetrameric channel. The auxiliary CATSPERB, CATSPERG2, CATSPERD and CATSPERE subunits form a pavilion-like structure over the pore which stabilizes the complex through interactions with CATSPER4, CATSPER3, CATSPER1 and CATSPER2 respectively. SLCO6C1 interacts with CATSPERE and TMEM262/CATSPERH interacts with CATSPERB, further stabilizing the complex. C2CD6/CATSPERT interacts at least with CATSPERD and is required for targeting the CatSper complex in the flagellar membrane.

It is found in the cell projection. The protein resides in the cilium. Its subcellular location is the flagellum membrane. Its function is as follows. Auxiliary component of the CatSper complex, a complex involved in sperm cell hyperactivation. This is Cation channel sperm-associated auxiliary subunit TMEM262 from Mus musculus (Mouse).